We begin with the raw amino-acid sequence, 173 residues long: Spermidine N(1)-acetyltransferase (173 aa).

The N-acetyltransferase domain maps to 5–162 (LTLRALERGD…GRYQDVKRMY (158 aa)). Spermine is bound by residues Met28, Glu33, Glu41, and 49–52 (HIHD). A Mg(2+)-binding site is contributed by Glu33. Positions 33 and 41 each coordinate spermidine. Residue Glu75 coordinates Mg(2+). 84–86 (EFQ) is a binding site for spermine. Acetyl-CoA is bound by residues 87–89 (III), 94–100 (QGKGFAR), and 127–136 (NPKAVHLYEE). Tyr134 serves as the catalytic Proton donor.

Belongs to the acetyltransferase family. Homododecamer; dimer of hexamers. Exists in solution in a variety of protein homooligomeric states including dodecamers in an open state. The presence of the polyamines spermidine or spermine shifts the equilibrium to dodecamers and induces the formation of the closed, symmetric dodecamers.

It is found in the cytoplasm. It carries out the reaction an alkane-alpha,omega-diamine + acetyl-CoA = an N-acetylalkane-alpha,omega-diamine + CoA + H(+). The enzyme catalyses spermidine + acetyl-CoA = N(1)-acetylspermidine + CoA + H(+). The catalysed reaction is spermidine + acetyl-CoA = N(8)-acetylspermidine + CoA + H(+). It catalyses the reaction spermine + acetyl-CoA = N(1)-acetylspermine + CoA + H(+). It participates in amine and polyamine degradation; spermidine degradation. The protein operates within amine and polyamine degradation; spermine degradation. Its activity is regulated as follows. Allosterically regulated by polyamines. Polyamines trigger conformational changes and induce the symmetric closed dodecameric state of the protein when they bind to their allosteric sites. In terms of biological role, involved in the protection against polyamine toxicity by regulating their concentration. Catalyzes the transfer of an acetyl group from acetyl coenzyme A (AcCoA) to the primary amino groups of spermidine to yield N(1)- and N(8)-acetylspermidine. It can use polyamines such as spermine and N(1)-acetylspermine, but not putrescine or cadaverine. The protein is Spermidine N(1)-acetyltransferase (speG) of Vibrio cholerae serotype O1 (strain ATCC 39315 / El Tor Inaba N16961).